We begin with the raw amino-acid sequence, 94 residues long: Large ribosomal subunit protein bL25 (94 aa).

Belongs to the bacterial ribosomal protein bL25 family. As to quaternary structure, part of the 50S ribosomal subunit; part of the 5S rRNA/L5/L18/L25 subcomplex. Contacts the 5S rRNA. Binds to the 5S rRNA independently of L5 and L18.

This is one of the proteins that binds to the 5S RNA in the ribosome where it forms part of the central protuberance. In Erwinia tasmaniensis (strain DSM 17950 / CFBP 7177 / CIP 109463 / NCPPB 4357 / Et1/99), this protein is Large ribosomal subunit protein bL25.